The primary structure comprises 279 residues: Tryptophan 2,3-dioxygenase (279 aa).

Substrate is bound by residues 48-52 (FIIQH), Tyr-110, and Arg-114. Position 237 (His-237) interacts with heme. Thr-251 lines the substrate pocket.

Belongs to the tryptophan 2,3-dioxygenase family. In terms of assembly, homotetramer. The cofactor is heme.

The enzyme catalyses L-tryptophan + O2 = N-formyl-L-kynurenine. It participates in amino-acid degradation; L-tryptophan degradation via kynurenine pathway; L-kynurenine from L-tryptophan: step 1/2. Its function is as follows. Heme-dependent dioxygenase that catalyzes the oxidative cleavage of the L-tryptophan (L-Trp) pyrrole ring and converts L-tryptophan to N-formyl-L-kynurenine. Catalyzes the oxidative cleavage of the indole moiety. The protein is Tryptophan 2,3-dioxygenase of Bradyrhizobium sp. (strain ORS 278).